The sequence spans 540 residues: Sesquiterpene synthase 15b (540 aa).

Residues D292, D296, and E445 each contribute to the Mg(2+) site. Residues 292 to 296 (DDIYD) carry the DDXXD motif motif.

It belongs to the terpene synthase family. Tpsa subfamily. The cofactor is Mg(2+). Mn(2+) serves as cofactor.

The enzyme catalyses (2E,6E)-farnesyl diphosphate = germacrene A + diphosphate. It participates in secondary metabolite biosynthesis; terpenoid biosynthesis. Sesquiterpene synthase involved in the biosynthesis of volatile compounds. Mediates the conversion of (2E,6E)-farnesyl diphosphate (FPP) into germacrene A. This is Sesquiterpene synthase 15b from Solanum habrochaites (Wild tomato).